A 117-amino-acid chain; its full sequence is UPF0251 protein DET0218 (117 aa).

Belongs to the UPF0251 family.

In Dehalococcoides mccartyi (strain ATCC BAA-2266 / KCTC 15142 / 195) (Dehalococcoides ethenogenes (strain 195)), this protein is UPF0251 protein DET0218.